A 430-amino-acid polypeptide reads, in one-letter code: MLDPNLLRNEPDAVAEKLARRGFKLDVDKLGALEERRKVLQVKTENLQAERNSRSKSIGQAKARGEDIEPLRLEVNKLGEELDAAKAELDALQAEIRDIALTIPNLPADEVPVGKDENDNVEVSRWGTPREFDFEVRDHVTLGEMHSGLDFAAAVKLTGSRFVVMKGQIARMHRALSQFMLDLHTEQHGYSENYVPYLVNQDTLYGTGQLPKFAGDLFHTRPLEEEADTSNYALIPTAEVPLTNLVRGEIIDEDDLPIKMTAHTPCFRSEAGSYGRDTRGLIRMHQFDKVEMVQIVRPEDSMAALEEMTGHAEKVLQLLGLPYRKIILCTGDMGFGACKTYDLEVWIPAQNTYREISSCSNVWDFQARRMQARCRSKSDKKTRLVHTLNGSGLAVGRTLVAVMENYQQADGRIEVPEVLRPYMNGLEYIG.

Residue 237 to 239 (TAE) participates in L-serine binding. 268–270 (RSE) is an ATP binding site. Glutamate 291 provides a ligand contact to L-serine. An ATP-binding site is contributed by 355 to 358 (EISS). Residue serine 391 participates in L-serine binding.

Belongs to the class-II aminoacyl-tRNA synthetase family. Type-1 seryl-tRNA synthetase subfamily. In terms of assembly, homodimer. The tRNA molecule binds across the dimer.

Its subcellular location is the cytoplasm. The enzyme catalyses tRNA(Ser) + L-serine + ATP = L-seryl-tRNA(Ser) + AMP + diphosphate + H(+). The catalysed reaction is tRNA(Sec) + L-serine + ATP = L-seryl-tRNA(Sec) + AMP + diphosphate + H(+). It functions in the pathway aminoacyl-tRNA biosynthesis; selenocysteinyl-tRNA(Sec) biosynthesis; L-seryl-tRNA(Sec) from L-serine and tRNA(Sec): step 1/1. In terms of biological role, catalyzes the attachment of serine to tRNA(Ser). Is also able to aminoacylate tRNA(Sec) with serine, to form the misacylated tRNA L-seryl-tRNA(Sec), which will be further converted into selenocysteinyl-tRNA(Sec). The sequence is that of Serine--tRNA ligase from Escherichia coli O139:H28 (strain E24377A / ETEC).